Reading from the N-terminus, the 725-residue chain is Aminopeptidase RNPEPL1 (725 aa).

Valine 326 to asparagine 330 serves as a coordination point for substrate. Residue histidine 353 participates in Zn(2+) binding. Glutamate 354 serves as the catalytic Proton acceptor. Histidine 357 and glutamate 376 together coordinate Zn(2+). The disordered stretch occupies residues glycine 676 to aspartate 699. Low complexity predominate over residues serine 679 to glutamate 690.

This sequence belongs to the peptidase M1 family. Zn(2+) serves as cofactor. In terms of tissue distribution, ubiquitously expressed. Expressed at relatively higher levels in heart and skeletal muscle.

The enzyme catalyses Release of N-terminal amino acids, preferentially methionine, from peptides and arylamides.. Its activity is regulated as follows. Inhibited by calcium but not affected by chloride ions. Inhibited by amastatin and to a lower extent by bestatin. Weakly inhibited by puromycin. Functionally, broad specificity aminopeptidase which preferentially hydrolyzes an N-terminal methionine, citrulline or glutamine. The polypeptide is Aminopeptidase RNPEPL1 (Homo sapiens (Human)).